We begin with the raw amino-acid sequence, 431 residues long: Trigger factor (431 aa).

In terms of domain architecture, PPIase FKBP-type spans 161 to 246; the sequence is DDRVTIDFVG…LKKVENIVLP (86 aa).

The protein belongs to the FKBP-type PPIase family. Tig subfamily.

It is found in the cytoplasm. It catalyses the reaction [protein]-peptidylproline (omega=180) = [protein]-peptidylproline (omega=0). In terms of biological role, involved in protein export. Acts as a chaperone by maintaining the newly synthesized protein in an open conformation. Functions as a peptidyl-prolyl cis-trans isomerase. The sequence is that of Trigger factor from Glaesserella parasuis serovar 5 (strain SH0165) (Haemophilus parasuis).